We begin with the raw amino-acid sequence, 688 residues long: Complement C1s subcomponent (688 aa).

An N-terminal signal peptide occupies residues 1-15 (MWCFVFFSLLASFSA). A CUB 1 domain is found at 16 to 130 (EPTMYGEILS…TGFAAYYSAV (115 aa)). Ca(2+)-binding residues include Glu60, Asp68, Asp113, Asp131, Val132, and Glu134. A disulfide bridge connects residues Cys65 and Cys83. The EGF-like; calcium-binding domain occupies 131–172 (DVNECTDFTDVPCSHFCNNFIGGYFCSCPPEYFLHDDMRTCG). Disulfide bonds link Cys135–Cys147, Cys143–Cys156, and Cys158–Cys171. Ca(2+) is bound by residues Asn149, Phe150, and Gly153. A (3R)-3-hydroxyasparagine modification is found at Asn149. A glycan (N-linked (GlcNAc...) asparagine) is linked at Asn174. A disulfide bridge connects residues Cys175 and Cys202. The region spanning 175–290 (CSGDVFTALI…KGWKLRYHGD (116 aa)) is the CUB 2 domain. Ca(2+)-binding residues include Glu226, Asp236, Asp275, Gly278, and Gln279. A disulfide bridge links Cys234 with Cys251. Sushi domains lie at 292-356 (IPCP…ECQP) and 357-423 (VDCG…KCIP). 7 disulfide bridges follow: Cys294–Cys341, Cys321–Cys354, Cys359–Cys403, Cys386–Cys421, Cys425–Cys549, Cys595–Cys618, and Cys627–Cys659. N-linked (GlcNAc...) asparagine glycosylation is present at Asn406. Positions 438-680 (IFGGYSTKIQ…YVDWILKTMQ (243 aa)) constitute a Peptidase S1 domain. Catalysis depends on charge relay system residues His475 and Asp529. Ser631 acts as the Charge relay system in catalysis.

This sequence belongs to the peptidase S1 family. As to quaternary structure, core component of the complement C1 complex, a calcium-dependent complex composed of 1 molecule of the C1Q subcomplex, 2 molecules of C1R and 2 molecules of C1S. The C1Q subcomplex is composed 18 subunits: 3 chains of C1QA, C1QB, and C1QC trimerize to form 6 collagen-like triple helices connected to six globular ligand-recognition modules. Cleaved and activated by C1R to generate Complement C1s subcomponent heavy and light chains. Post-translationally, the iron and 2-oxoglutarate dependent 3-hydroxylation of aspartate and asparagine is (R) stereospecific within EGF domains.

The protein localises to the secreted. It localises to the cell surface. It catalyses the reaction Cleavage of Arg-|-Ala bond in complement component C4 to form C4a and C4b, and Lys(or Arg)-|-Lys bond in complement component C2 to form C2a and C2b: the 'classical' pathway C3 convertase.. With respect to regulation, cleaved and activated by C1R. Immunoglobulin-binding promotes autoactivation of C1R, which results in the cleavage of the Arg-Ile bond in the catalytic domain. Inhibited by C1 inhibitor (SERPING1). In terms of biological role, component of the complement C1 complex, a multiprotein complex that initiates the classical pathway of the complement system, a cascade of proteins that leads to phagocytosis and breakdown of pathogens and signaling that strengthens the adaptive immune system. C1S is activated following association of the C1 complex with immunoglobulins (IgG or IgM) complexed with antigens to form antigen-antibody complexes on the surface of pathogens. C1S is cleaved and activated by C1R to generate C1s subcomponent heavy and light chains. C1s subcomponent light chain then cleaves and activates C2 and C4, the next components of the classical complement pathway. Its function is as follows. Serine protease component of the complement C1 complex, which catalyzes cleavage and activation of C2 and C4, the next components of the classical complement pathway. Also cleaves IGFBP5 and thereby inhibits the trophic effects of IGF1. This Rattus norvegicus (Rat) protein is Complement C1s subcomponent.